Here is a 466-residue protein sequence, read N- to C-terminus: MNLTHIHSVYLIGIGGIGMSALARWFKQNNYNVGGYDKTSSDLTKALEAEGMAVHYTDSMAEVPEAFTKKDSVLVIYTPAIPADHLELNFFRENGYALYKRSQVLGFLTKELKTIGIAGTHGKTTTSSMAAHIMHESGMPCSAFLGGITQNYNTNILIGNHGDGAGWVVAEADEYDRSFLQLSPDIAVINNMDPDHLDIYSDVQSFYDSFNEYLKKLKPGGIVIRRVDVDVQIPSHASLSVTFGESVEADYRIQNVVVEDGGVTFSIDHDFTRWNNIRIEMPGMHNVMNATAAFLAAHFAGVSIDSIKASLRSFGGVKRRFEYIYKNTKLVYVDDYAHHPTELEALLKAVRMVFPGKKVVTVFQPHLFSRTRDFMQEFAQSLALTDELLLMEIYPARELPIEGITSDVLLNLIPSTNKKVVSKESLLTELEKLNFDVVITAGAGDIDRFIQPIKLLCEQRYGKANG.

119–125 (GTHGKTT) contributes to the ATP binding site.

This sequence belongs to the MurCDEF family.

The protein localises to the cytoplasm. The enzyme catalyses UDP-N-acetyl-alpha-D-muramate + L-alanine + ATP = UDP-N-acetyl-alpha-D-muramoyl-L-alanine + ADP + phosphate + H(+). It participates in cell wall biogenesis; peptidoglycan biosynthesis. Cell wall formation. In Cytophaga hutchinsonii (strain ATCC 33406 / DSM 1761 / CIP 103989 / NBRC 15051 / NCIMB 9469 / D465), this protein is UDP-N-acetylmuramate--L-alanine ligase.